A 309-amino-acid polypeptide reads, in one-letter code: NAD kinase 2 (309 aa).

Asp81 acts as the Proton acceptor in catalysis. Residues 81–82 (DG), 155–156 (NE), Asp185, 196–201 (TAYALS), and Asn255 contribute to the NAD(+) site.

It belongs to the NAD kinase family. The cofactor is a divalent metal cation.

Its subcellular location is the cytoplasm. It catalyses the reaction NAD(+) + ATP = ADP + NADP(+) + H(+). Involved in the regulation of the intracellular balance of NAD and NADP, and is a key enzyme in the biosynthesis of NADP. Catalyzes specifically the phosphorylation on 2'-hydroxyl of the adenosine moiety of NAD to yield NADP. This is NAD kinase 2 from Gloeobacter violaceus (strain ATCC 29082 / PCC 7421).